Consider the following 314-residue polypeptide: Ribosomal protein L11 methyltransferase (314 aa).

Residues Thr-163, Gly-184, Asp-206, and Asn-248 each contribute to the S-adenosyl-L-methionine site.

Belongs to the methyltransferase superfamily. PrmA family.

Its subcellular location is the cytoplasm. It carries out the reaction L-lysyl-[protein] + 3 S-adenosyl-L-methionine = N(6),N(6),N(6)-trimethyl-L-lysyl-[protein] + 3 S-adenosyl-L-homocysteine + 3 H(+). In terms of biological role, methylates ribosomal protein L11. The sequence is that of Ribosomal protein L11 methyltransferase from Lactobacillus delbrueckii subsp. bulgaricus (strain ATCC BAA-365 / Lb-18).